Here is a 620-residue protein sequence, read N- to C-terminus: Translocator protein BipB (620 aa).

The segment at 58-95 (QCDAQPAAHDARLDDKPALRAPQERDAPPLGASDTGSR) is disordered. Residues 66–84 (HDARLDDKPALRAPQERDA) show a composition bias toward basic and acidic residues. Residues 309 to 339 (EMQAKREAELQKKSDEYQAQVKKAEEMQKTM) adopt a coiled-coil conformation. Transmembrane regions (helical) follow at residues 355–375 (FAAA…GLAL), 401–421 (AILK…LVAC), and 430–450 (LAGA…AAFV).

Belongs to the SctE/SipB/YopB family.

The protein localises to the secreted. It is found in the host membrane. Functionally, plays a role in the bacterium-induced formation of multinucleated giant cell (MNGC), which is formed after host cell fusion, as well as in the intercellular spreading of bacteria and in the induction of apoptosis in macrophages. May act in concert with other effector proteins to induce fusion of host cell membranes. In Burkholderia pseudomallei (strain 1710b), this protein is Translocator protein BipB (bipB).